Consider the following 31-residue polypeptide: Cytochrome b6-f complex subunit 6 (31 aa).

Residues isoleucine 3–phenylalanine 23 form a helical membrane-spanning segment.

The protein belongs to the PetL family. In terms of assembly, the 4 large subunits of the cytochrome b6-f complex are cytochrome b6, subunit IV (17 kDa polypeptide, PetD), cytochrome f and the Rieske protein, while the 4 small subunits are PetG, PetL, PetM and PetN. The complex functions as a dimer.

It is found in the plastid. The protein localises to the chloroplast thylakoid membrane. Component of the cytochrome b6-f complex, which mediates electron transfer between photosystem II (PSII) and photosystem I (PSI), cyclic electron flow around PSI, and state transitions. PetL is important for photoautotrophic growth as well as for electron transfer efficiency and stability of the cytochrome b6-f complex. This chain is Cytochrome b6-f complex subunit 6, found in Gnetum parvifolium (Small-leaved jointfir).